Reading from the N-terminus, the 144-residue chain is MSEQKPNKKPEKKPDITFFHPDLLEAPADGRAPYLKGYRCKKCGQLDFPKLSPCPSCWGEEFEVVPLSRRGKLYSFSDNFIGQAGMKTPYSFGYIDLPENLRIFAQLEGAPGSFRCDDEVELTVGTVRDNRDGVPLISYKFRKI.

Positions 40, 43, 54, and 57 each coordinate Zn(2+).

The protein belongs to the BbsA family. In terms of assembly, heterotetramer composed of two BbsA subunits and two BbsB subunits. BbsA forms homodimeric subcomplexes. Both BbsA and BbsB are essential for enzymatic activity.

The catalysed reaction is (S)-2-benzoylsuccinyl-CoA + CoA = benzoyl-CoA + succinyl-CoA. It participates in xenobiotic degradation; toluene degradation. Functionally, component of the BbsAB thiolase complex, which catalyzes the thiolytic cleavage of (S)-2-benzoylsuccinyl-CoA to succinyl-CoA and benzoyl-CoA, the final step of anaerobic toluene metabolism. The BbsA subunit critically contributes to an induced-fit process for productive binding of a CoA substrate into the active site of BbsB. This is Benzoylsuccinyl-CoA thiolase subunit BbsA from Thauera aromatica.